Reading from the N-terminus, the 254-residue chain is 3-oxo-5-alpha-steroid 4-dehydrogenase 2 (254 aa).

4 helical membrane passes run 8-28 (SPVLAGSATLVALGALVLYVA), 72-92 (PLSLFGPPGTVLLGLFCVHYF), 146-166 (FCLGVFLFILGMGVNIHSDYI), and 206-226 (LATWSLPALAFAFFSVCFLGL).

This sequence belongs to the steroid 5-alpha reductase family.

The protein localises to the microsome membrane. It localises to the endoplasmic reticulum membrane. It catalyses the reaction a 3-oxo-5alpha-steroid + NADP(+) = a 3-oxo-Delta(4)-steroid + NADPH + H(+). The catalysed reaction is 17beta-hydroxy-5alpha-androstan-3-one + NADP(+) = testosterone + NADPH + H(+). The enzyme catalyses 5alpha-pregnane-3,20-dione + NADP(+) = progesterone + NADPH + H(+). In terms of biological role, converts testosterone (T) into 5-alpha-dihydrotestosterone (DHT) and progesterone or corticosterone into their corresponding 5-alpha-3-oxosteroids. It plays a central role in sexual differentiation and androgen physiology. This is 3-oxo-5-alpha-steroid 4-dehydrogenase 2 (SRD5A2) from Macaca fascicularis (Crab-eating macaque).